A 588-amino-acid chain; its full sequence is Solute carrier family 2, facilitated glucose transporter member 12 (588 aa).

Topologically, residues 1–28 (MLAHSTAQDLILQQRSSDDHPQTNPRQT) are cytoplasmic. A helical transmembrane segment spans residues 29–49 (GCGAFIILSSVIAAISGLLVG). Residues 50 to 74 (YELGIISGALLQLQSLLELTCQQQE) are Extracellular-facing. A helical membrane pass occupies residues 75–95 (IVVSALLIGALVASLVGGCLI). Residues 96 to 103 (DLYGRRTT) lie on the Cytoplasmic side of the membrane. Residues 104 to 124 (IIFTSILLVFANLLPVVVVSY) form a helical membrane-spanning segment. The Extracellular segment spans residues 125–131 (GSLIAGR). Residues 132 to 152 (IFIGVSISLSAIATCVYIAEL) traverse the membrane as a helical segment. Residues 153–158 (SPQDKR) are Cytoplasmic-facing. Residues 159–179 (GMLVSLNELMIVAGILLAYIC) traverse the membrane as a helical segment. Residues 180–191 (NYLFASVNNGWK) are Extracellular-facing. The chain crosses the membrane as a helical span at residues 192–212 (YMFGLITPLAALQAVAMFFLP). Residues 213–272 (RSPRFLIMKGYDDAAGKVLQKLRATTDINEELTAIKSSIKAEYQYKFLDLFCSRDNMRAR) lie on the Cytoplasmic side of the membrane. The chain crosses the membrane as a helical span at residues 273–293 (LLIGLTLSFFVQITGQPNILF). At 294–311 (YASTVLKSVGFQSTEAAS) the chain is on the extracellular side. Residues 312–332 (LASTGIGVVKVVSTIPAIFLV) form a helical membrane-spanning segment. Over 333 to 339 (DKIGSKT) the chain is Cytoplasmic. Residues 340-360 (FLCIGSAVMAVSLVSVGLVSL) traverse the membrane as a helical segment. The Extracellular segment spans residues 361 to 459 (QLDVNYNNIC…IPEYMKWLCL (99 aa)). N-linked (GlcNAc...) asparagine glycosylation is found at Asn377, Asn395, and Asn419. Residues 460-480 (SSLLAFVAAFSIGLGPMAWLV) traverse the membrane as a helical segment. Residues 481–492 (QSEIFPAGIKGR) are Cytoplasmic-facing. A helical transmembrane segment spans residues 493 to 513 (AFAITSSMNWGMNLLISLTFL). Residues 514–522 (TLTEMIGLP) lie on the Extracellular side of the membrane. A helical membrane pass occupies residues 523 to 543 (WMLFGYALMSIASLVFVIMFV). The Cytoplasmic portion of the chain corresponds to 544–588 (PNTKGRPLEEISKELANRSYMCNAVCHRRRSKKKLTPVALIQSPA).

This sequence belongs to the major facilitator superfamily. Sugar transporter (TC 2.A.1.1) family. Glucose transporter subfamily.

The protein localises to the cell membrane. Its subcellular location is the endomembrane system. It is found in the cytoplasm. The protein resides in the perinuclear region. It carries out the reaction D-glucose(out) = D-glucose(in). In terms of biological role, insulin-regulated facilitative glucose transporter. The chain is Solute carrier family 2, facilitated glucose transporter member 12 from Xenopus laevis (African clawed frog).